The chain runs to 494 residues: Casein kinase I homolog HRR25 (494 aa).

Residues 9-278 (FRIGRKIGSG…LARLFKDLSI (270 aa)) form the Protein kinase domain. Residues 15 to 23 (IGSGSFGDI) and K38 each bind ATP. D128 functions as the Proton acceptor in the catalytic mechanism. S143 is subject to Phosphoserine. Residues 394–494 (RQQQPQQQVQ…DKPAGQSIWL (101 aa)) are disordered. 2 stretches are compositionally biased toward low complexity: residues 395 to 418 (QQQP…QQQP) and 432 to 444 (QQQQ…QQQQ). The span at 445-479 (VPMATTRATQYPPQINSNNFNTNQASVPPQMRSNP) shows a compositional bias: polar residues.

It belongs to the protein kinase superfamily. CK1 Ser/Thr protein kinase family. Casein kinase I subfamily. In terms of assembly, interacts with HRI1. Interacts with ELP1/IKI3; the interaction leads to ELP1/IKI3 phosphorylation.

It localises to the cytoplasm. The protein localises to the nucleus. Its subcellular location is the nucleolus. The protein resides in the nucleoplasm. It carries out the reaction L-seryl-[protein] + ATP = O-phospho-L-seryl-[protein] + ADP + H(+). The enzyme catalyses L-threonyl-[protein] + ATP = O-phospho-L-threonyl-[protein] + ADP + H(+). Its function is as follows. Protein kinase which phosphorylates serine and threonine residues. Can use casein as a substrate. Phosphorylates elongator complex member ELP1/IKI3 on 'Ser-1198' and 'Ser-1202' which promotes the tRNA modification function of the complex. Associated with repair of damaged DNA and meiosis. This chain is Casein kinase I homolog HRR25 (HRR25), found in Saccharomyces cerevisiae (strain ATCC 204508 / S288c) (Baker's yeast).